The chain runs to 428 residues: Enolase (428 aa).

Residue Q173 coordinates (2R)-2-phosphoglycerate. Residue E217 is the Proton donor of the active site. Residues D253, E294, and D320 each coordinate Mg(2+). Residues K345, R374, S375, and K396 each coordinate (2R)-2-phosphoglycerate. K345 acts as the Proton acceptor in catalysis.

It belongs to the enolase family. Requires Mg(2+) as cofactor.

The protein localises to the cytoplasm. Its subcellular location is the secreted. The protein resides in the cell surface. The enzyme catalyses (2R)-2-phosphoglycerate = phosphoenolpyruvate + H2O. Its pathway is carbohydrate degradation; glycolysis; pyruvate from D-glyceraldehyde 3-phosphate: step 4/5. Its function is as follows. Catalyzes the reversible conversion of 2-phosphoglycerate (2-PG) into phosphoenolpyruvate (PEP). It is essential for the degradation of carbohydrates via glycolysis. In Methanosarcina barkeri (strain Fusaro / DSM 804), this protein is Enolase.